We begin with the raw amino-acid sequence, 343 residues long: ATP phosphoribosyltransferase regulatory subunit (343 aa).

Residues 324-343 form a disordered region; that stretch reads RANGRAKRPARPRRSPPRPR. Residues 327 to 343 are compositionally biased toward basic residues; it reads GRAKRPARPRRSPPRPR.

Belongs to the class-II aminoacyl-tRNA synthetase family. HisZ subfamily. As to quaternary structure, heteromultimer composed of HisG and HisZ subunits.

It is found in the cytoplasm. The protein operates within amino-acid biosynthesis; L-histidine biosynthesis; L-histidine from 5-phospho-alpha-D-ribose 1-diphosphate: step 1/9. Functionally, required for the first step of histidine biosynthesis. May allow the feedback regulation of ATP phosphoribosyltransferase activity by histidine. The sequence is that of ATP phosphoribosyltransferase regulatory subunit from Anaeromyxobacter sp. (strain Fw109-5).